Here is a 130-residue protein sequence, read N- to C-terminus: Transcription antitermination protein NusB (130 aa).

It belongs to the NusB family.

Involved in transcription antitermination. Required for transcription of ribosomal RNA (rRNA) genes. Binds specifically to the boxA antiterminator sequence of the ribosomal RNA (rrn) operons. The polypeptide is Transcription antitermination protein NusB (Sulfurovum sp. (strain NBC37-1)).